The following is a 122-amino-acid chain: Large ribosomal subunit protein uL14c (122 aa).

Belongs to the universal ribosomal protein uL14 family. As to quaternary structure, part of the 50S ribosomal subunit.

It localises to the plastid. Its subcellular location is the chloroplast. Its function is as follows. Binds to 23S rRNA. This chain is Large ribosomal subunit protein uL14c, found in Buxus microphylla (Littleleaf boxwood).